We begin with the raw amino-acid sequence, 191 residues long: Prostaglandin-H2 D-isomerase (191 aa).

Positions 1-24 are cleaved as a signal peptide; the sequence is MGALCTLWLGLVLLGVLGALQTSA. Glutamine 25 carries the post-translational modification Pyrrolidone carboxylic acid. N-linked (GlcNAc...) asparagine glycosylation occurs at asparagine 51. Cysteine 65 acts as the Nucleophile in catalysis. The N-linked (GlcNAc...) asparagine glycan is linked to asparagine 78. Cysteine 89 and cysteine 186 are oxidised to a cystine.

Belongs to the calycin superfamily. Lipocalin family. Monomer. Post-translationally, N- and O-glycosylated. Both N-glycosylation recognition sites are almost quantitatively occupied by N-glycans of the biantennary complex type, with a considerable proportion of structures bearing a bisecting GlcNAc. N-glycan at Asn-78: dHex1Hex5HexNAc4. Agalacto structure as well as sialylated and nonsialylated oligosaccharides bearing alpha2-3- and/or alpha2-6-linked NeuNAc are present.

It localises to the rough endoplasmic reticulum. The protein localises to the nucleus membrane. The protein resides in the golgi apparatus. Its subcellular location is the cytoplasm. It is found in the perinuclear region. It localises to the secreted. The catalysed reaction is prostaglandin H2 = prostaglandin D2. In terms of biological role, catalyzes the conversion of PGH2 to PGD2, a prostaglandin involved in smooth muscle contraction/relaxation and a potent inhibitor of platelet aggregation. Involved in a variety of CNS functions, such as sedation, NREM sleep and PGE2-induced allodynia, and may have an anti-apoptotic role in oligodendrocytes. Binds small non-substrate lipophilic molecules, including biliverdin, bilirubin, retinal, retinoic acid and thyroid hormone, and may act as a scavenger for harmful hydrophobic molecules and as a secretory retinoid and thyroid hormone transporter. Possibly involved in development and maintenance of the blood-brain, blood-retina, blood-aqueous humor and blood-testis barrier. It is likely to play important roles in both maturation and maintenance of the central nervous system and male reproductive system. Involved in PLA2G3-dependent maturation of mast cells. PLA2G3 is secreted by immature mast cells and acts on nearby fibroblasts upstream to PTDGS to synthesize PGD2, which in turn promotes mast cell maturation and degranulation via PTGDR. In Canis lupus familiaris (Dog), this protein is Prostaglandin-H2 D-isomerase (PTGDS).